A 712-amino-acid polypeptide reads, in one-letter code: Polyribonucleotide nucleotidyltransferase (712 aa).

Positions 484 and 490 each coordinate Mg(2+). Positions 551–610 (PKVFTIQIHPDKIRDIIGPGGKVIRAIQAETGTRVDVDDSGLVKVSAVNLEEGEAALQMI) constitute a KH domain. The S1 motif domain occupies 620–688 (GAVYEGTVVK…KDGKIRLSRK (69 aa)). A disordered region spans residues 689-712 (ALLEEENGKSGPENGAPQRDKNRH).

Belongs to the polyribonucleotide nucleotidyltransferase family. Requires Mg(2+) as cofactor.

The protein localises to the cytoplasm. The catalysed reaction is RNA(n+1) + phosphate = RNA(n) + a ribonucleoside 5'-diphosphate. Involved in mRNA degradation. Catalyzes the phosphorolysis of single-stranded polyribonucleotides processively in the 3'- to 5'-direction. This is Polyribonucleotide nucleotidyltransferase from Desulfatibacillum aliphaticivorans.